We begin with the raw amino-acid sequence, 607 residues long: Large ribosomal subunit assembly factor BipA (607 aa).

The 196-residue stretch at 3–198 (EKLRNIAIIA…AIVDHVPAPD (196 aa)) folds into the tr-type G domain. GTP-binding positions include 15–20 (DHGKTT) and 128–131 (NKVD).

This sequence belongs to the TRAFAC class translation factor GTPase superfamily. Classic translation factor GTPase family. BipA subfamily. Monomer.

The protein resides in the cytoplasm. The enzyme catalyses GTP + H2O = GDP + phosphate + H(+). Its function is as follows. A 50S ribosomal subunit assembly protein with GTPase activity, required for 50S subunit assembly at low temperatures, may also play a role in translation. Binds GTP and analogs. Binds the 70S ribosome between the 30S and 50S subunits, in a similar position as ribosome-bound EF-G; it contacts a number of ribosomal proteins, both rRNAs and the A-site tRNA. This Shigella flexneri protein is Large ribosomal subunit assembly factor BipA.